Here is a 285-residue protein sequence, read N- to C-terminus: Diphthine methyl ester synthase (285 aa).

Residues leucine 9, aspartate 84, glycine 87, 112–113 (SI), and leucine 163 each bind S-adenosyl-L-methionine. Serine 171 carries the phosphoserine modification. S-adenosyl-L-methionine-binding residues include valine 225 and histidine 250.

The protein belongs to the diphthine synthase family.

The catalysed reaction is 2-[(3S)-amino-3-carboxypropyl]-L-histidyl-[translation elongation factor 2] + 4 S-adenosyl-L-methionine = diphthine methyl ester-[translation elongation factor 2] + 4 S-adenosyl-L-homocysteine + 3 H(+). Its pathway is protein modification; peptidyl-diphthamide biosynthesis. Its function is as follows. S-adenosyl-L-methionine-dependent methyltransferase that catalyzes four methylations of the modified target histidine residue in translation elongation factor 2 (EF-2), to form an intermediate called diphthine methyl ester. The four successive methylation reactions represent the second step of diphthamide biosynthesis. This chain is Diphthine methyl ester synthase (DPH5), found in Homo sapiens (Human).